The following is a 687-amino-acid chain: C-mannosyltransferase dpy-19 (687 aa).

11 helical membrane-spanning segments follow: residues 24–44 (GISG…VGFL), 170–190 (ITGV…LGVL), 191–211 (VSDS…NHGE), 223–243 (ESFA…IIKY), 253–273 (LLIS…FAFF), 276–296 (ICSI…AKTI), 303–323 (AFFI…ALYF), 324–344 (PSIW…GIRL), 347–367 (LYLL…KVGF), 415–435 (LSST…SWDF), and 454–474 (GEVI…VLIM).

The protein belongs to the dpy-19 family.

It is found in the endoplasmic reticulum membrane. In terms of biological role, C-mannosyltransferase that mediates C-mannosylation of tryptophan residues on target proteins such as unc-5 and mig-21. Mediates the attachment of alpha-mannose in C-C linkage to the C2 of the indole ring of tryptophan. C-mannosylation takes place in the endoplasmic reticulum and frequently found in thrombospondin (TSP) type-1 repeats and in the WSXWS motif of type I cytokine receptors. Required to orient neuroblasts QL and QR correctly on the anterior/posterior (A/P) axis: QL and QR are born in the same A/P position, but polarize and migrate left/right asymmetrically, QL migrates toward the posterior and QR migrates toward the anterior. Required with unc-40 to express mab-5 correctly in the Q cell descendants. This is C-mannosyltransferase dpy-19 from Caenorhabditis briggsae.